The sequence spans 349 residues: Dihydroorotase (349 aa).

2 residues coordinate Zn(2+): histidine 17 and histidine 19. Residues 19 to 21 and asparagine 45 contribute to the substrate site; that span reads HLR. Zn(2+) is bound by residues lysine 103, histidine 140, and histidine 178. Residue lysine 103 is modified to N6-carboxylysine. Residue histidine 140 participates in substrate binding. Leucine 224 provides a ligand contact to substrate. Position 252 (aspartate 252) interacts with Zn(2+). Aspartate 252 is a catalytic residue. 2 residues coordinate substrate: histidine 256 and alanine 268.

This sequence belongs to the metallo-dependent hydrolases superfamily. DHOase family. Class II DHOase subfamily. As to quaternary structure, homodimer. Zn(2+) is required as a cofactor.

It carries out the reaction (S)-dihydroorotate + H2O = N-carbamoyl-L-aspartate + H(+). It functions in the pathway pyrimidine metabolism; UMP biosynthesis via de novo pathway; (S)-dihydroorotate from bicarbonate: step 3/3. Catalyzes the reversible cyclization of carbamoyl aspartate to dihydroorotate. The protein is Dihydroorotase of Buchnera aphidicola subsp. Schizaphis graminum (strain Sg).